A 253-amino-acid chain; its full sequence is Triosephosphate isomerase (253 aa).

Residue N8 to K10 participates in substrate binding. H93 (electrophile) is an active-site residue. E165 functions as the Proton acceptor in the catalytic mechanism. Residues G171, S210, and G231–G232 each bind substrate.

Belongs to the triosephosphate isomerase family. As to quaternary structure, homodimer.

Its subcellular location is the cytoplasm. The enzyme catalyses D-glyceraldehyde 3-phosphate = dihydroxyacetone phosphate. Its pathway is carbohydrate biosynthesis; gluconeogenesis. It functions in the pathway carbohydrate degradation; glycolysis; D-glyceraldehyde 3-phosphate from glycerone phosphate: step 1/1. Involved in the gluconeogenesis. Catalyzes stereospecifically the conversion of dihydroxyacetone phosphate (DHAP) to D-glyceraldehyde-3-phosphate (G3P). This is Triosephosphate isomerase from Francisella tularensis subsp. novicida (strain U112).